Consider the following 321-residue polypeptide: Probable 2-oxoglutarate-dependent dioxygenase AOP1.2 (321 aa).

One can recognise a Fe2OG dioxygenase domain in the interval 165–270 (TYYLTRLMKY…RYSTGLFSIP (106 aa)). Fe cation-binding residues include His194, Asp196, and His251. 2-oxoglutarate is bound at residue Arg261.

The protein belongs to the iron/ascorbate-dependent oxidoreductase family. The cofactor is Fe(2+).

In terms of biological role, probable 2-oxoglutarate-dependent dioxygenase that may be involved in glucosinolates biosynthesis. May play a role in the production of aliphatic glucosinolates. In Arabidopsis thaliana (Mouse-ear cress), this protein is Probable 2-oxoglutarate-dependent dioxygenase AOP1.2 (AOP1.2).